A 225-amino-acid chain; its full sequence is Chalcone--flavanone isomerase 3 (225 aa).

Residues Thr51, Asn116, and Thr193 each contribute to the substrate site.

The protein belongs to the chalcone isomerase family.

The catalysed reaction is a chalcone = a flavanone.. Its pathway is secondary metabolite biosynthesis; flavonoid biosynthesis. Functionally, catalyzes the intramolecular cyclization of bicyclic chalcones into tricyclic (S)-flavanones. Responsible for the isomerization of 4,2',4',6'-tetrahydroxychalcone (also termed chalcone) into naringenin. The protein is Chalcone--flavanone isomerase 3 (CHI3) of Lotus japonicus (Lotus corniculatus var. japonicus).